The primary structure comprises 509 residues: Tyrosine-protein phosphatase non-receptor type substrate 1 (509 aa).

A signal peptide spans 1–31; sequence MEPAGPAPGRLGPLLFCLLLSASCFCAGASG. In terms of domain architecture, Ig-like V-type spans 32–138; sequence KELKVTQADK…IVEPDTEIKS (107 aa). The Extracellular portion of the chain corresponds to 32-373; it reads KELKVTQADK…PDNNAYYNWN (342 aa). 13 N-linked (GlcNAc...) asparagine glycosylation sites follow: asparagine 54, asparagine 93, asparagine 169, asparagine 181, asparagine 205, asparagine 209, asparagine 242, asparagine 246, asparagine 271, asparagine 293, asparagine 312, asparagine 320, and asparagine 345. Cysteine 55 and cysteine 122 are disulfide-bonded. Ig-like C1-type domains lie at 150–248 and 255–349; these read PSSP…ANFS and PTLK…HTVR. The cysteines at positions 172 and 229 are disulfide-linked. Cysteine 274 and cysteine 332 form a disulfide bridge. Residues 374 to 394 form a helical membrane-spanning segment; it reads VFIGVGVACALLVVLLMAALY. The Cytoplasmic segment spans residues 395–509; the sequence is LLRIKQKKAK…EYASVQVQRK (115 aa). The residue at position 436 (tyrosine 436) is a Phosphotyrosine; by Tyr-kinases. Positions 436–439 match the SH2-binding motif; it reads YADL. The interval 441–472 is disordered; that stretch reads LPKEKKPAPRVPEPNNHTEYASIETGKLPRPE. The SH3-binding signature appears at 446–451; it reads KPAPRV. Phosphotyrosine; by Tyr-kinases occurs at positions 460, 477, and 501. 3 short sequence motifs (SH2-binding) span residues 460–463, 477–480, and 501–504; these read YASI, YADL, and YASV. A disordered region spans residues 485–509; that stretch reads LNRAQPTPKPEPSFSEYASVQVQRK. Polar residues predominate over residues 500–509; it reads EYASVQVQRK.

In terms of assembly, binds PTPN11 when tyrosine-phosphorylated, except in macrophages, where it primarily binds PTPN6. Binds GRB2 in vitro. Binds FGR. Binds JAK2 irrespective of its phosphorylation status and forms a stable complex. Binds SCAP1 and/or SCAP2. The resulting complex recruits FYB1. Binds PTK2B. Interacts with TRIM2. In terms of processing, N-glycosylated. Post-translationally, phosphorylated on tyrosine residues in response to insulin, cell adhesion or epidermal growth factors. Dephosphorylated by PTPN11. As to expression, highly expressed in brain, spleen, lung, liver and kidney. Detected at lower levels in heart. Highly expressed in alveolar and peritoneal macrophages, and at lower levels in dendritic cells.

The protein localises to the membrane. In terms of biological role, immunoglobulin-like cell surface receptor for CD47. Acts as docking protein and induces translocation of PTPN6, PTPN11 and other binding partners from the cytosol to the plasma membrane. Supports adhesion of cerebellar neurons, neurite outgrowth and glial cell attachment. May play a key role in intracellular signaling during synaptogenesis and in synaptic function. Involved in the negative regulation of receptor tyrosine kinase-coupled cellular responses induced by cell adhesion, growth factors or insulin. Mediates negative regulation of phagocytosis, mast cell activation and dendritic cell activation. CD47 binding prevents maturation of immature dendritic cells and inhibits cytokine production by mature dendritic cells. Plays a role in antiviral immunity and limits new world arenavirus infection by decreasing virus internalization. Receptor for THBS1. Interaction with THBS1 stimulates phosphorylation of SIRPA. In response to THBS1, involved in ROS signaling in non-phagocytic cells, stimulating NADPH oxidase-derived ROS production. The chain is Tyrosine-protein phosphatase non-receptor type substrate 1 (Sirpa) from Rattus norvegicus (Rat).